The sequence spans 394 residues: Elongation factor Tu (394 aa).

The 196-residue stretch at 10-205 (KPHMNVGTIG…TMDNYFDLPE (196 aa)) folds into the tr-type G domain. The tract at residues 19 to 26 (GHVDHGKT) is G1. 19–26 (GHVDHGKT) contacts GTP. Residue threonine 26 coordinates Mg(2+). The G2 stretch occupies residues 61-65 (GITIN). The G3 stretch occupies residues 82 to 85 (DCPG). GTP contacts are provided by residues 82–86 (DCPGH) and 137–140 (NKLD). The segment at 137–140 (NKLD) is G4. The segment at 173–175 (SAF) is G5.

It belongs to the TRAFAC class translation factor GTPase superfamily. Classic translation factor GTPase family. EF-Tu/EF-1A subfamily. In terms of assembly, monomer.

The protein resides in the cytoplasm. The enzyme catalyses GTP + H2O = GDP + phosphate + H(+). Functionally, GTP hydrolase that promotes the GTP-dependent binding of aminoacyl-tRNA to the A-site of ribosomes during protein biosynthesis. This Borrelia duttonii (strain Ly) protein is Elongation factor Tu.